A 141-amino-acid polypeptide reads, in one-letter code: Hemoglobin subunit alpha-D (141 aa).

The Globin domain occupies 1 to 141; sequence MLTADDKKLI…VASVLAEKYR (141 aa). 2 residues coordinate heme b: histidine 58 and histidine 87.

This sequence belongs to the globin family. As to quaternary structure, heterotetramer of two alpha-D chains and two beta chains. Red blood cells.

Functionally, involved in oxygen transport from the lung to the various peripheral tissues. The polypeptide is Hemoglobin subunit alpha-D (HBAD) (Rhea americana (Greater rhea)).